We begin with the raw amino-acid sequence, 557 residues long: Hdr-like menaquinol oxidoreductase iron-sulfur subunit (557 aa).

2 4Fe-4S ferredoxin-type domains span residues 86–115 (RAFK…GDPK) and 155–184 (KEWY…AEVV). Positions 95, 98, 101, 105, 164, 167, 170, and 174 each coordinate [4Fe-4S] cluster.

[4Fe-4S] cluster serves as cofactor.

The protein resides in the membrane. Its function is as follows. Has menaquinol-oxidizing activity. The HmeC and HmeD subunits may together mediate electron transfer from menaquinol to an unidentified electron acceptor on the cytoplasmic side of the membrane. The sequence is that of Hdr-like menaquinol oxidoreductase iron-sulfur subunit (hmeD) from Archaeoglobus profundus (strain DSM 5631 / JCM 9629 / NBRC 100127 / Av18).